Reading from the N-terminus, the 325-residue chain is UDP-N-acetylglucosamine transporter ROCK1 (325 aa).

The Cytoplasmic portion of the chain corresponds to 1–13 (MATANGAKSPSSM). Residues 14-34 (GPKVLFYSILLTLQYGAQPLI) form a helical membrane-spanning segment. The Lumenal segment spans residues 35–42 (SKRCIRKD). Residues 43 to 63 (VIVTSSVLTCEIVKVICALIL) form a helical membrane-spanning segment. The Cytoplasmic segment spans residues 64 to 109 (MARNGSLKGLAKEWTLMGSLTASGLPAAIYALQNSLLQISYRSLDS). A helical membrane pass occupies residues 110-130 (LTFSILNQTKIFFTAFFTFII). At 131–135 (LRQKQ) the chain is on the lumenal side. The chain crosses the membrane as a helical span at residues 136–156 (SILQIGALCLLIMAAVLLSVG). Residues 157 to 171 (EGSNKDSSGINADQK) are Cytoplasmic-facing. A helical transmembrane segment spans residues 172–192 (LFYGIIPVLAASVLSGLASSL). Residues 193–203 (CQWASQVKKHS) lie on the Lumenal side of the membrane. The helical transmembrane segment at 204–224 (SYLMTVEMSIVGSLCLLVSTL) threads the bilayer. The Cytoplasmic portion of the chain corresponds to 225-241 (KSPDGEAIKKYGFFHGW). A helical membrane pass occupies residues 242–262 (TALTLVPVISNALGGILVGLV). Residues 263-270 (TSHAGGVR) lie on the Lumenal side of the membrane. The chain crosses the membrane as a helical span at residues 271 to 291 (KGFVIVSALLVTALLQFAFEG). At 292 to 325 (KPPSSYCLVALPLVMSSISMYQKYPYIDKKKKKV) the chain is on the cytoplasmic side.

This sequence belongs to the nucleotide-sugar transporter family. CMP-Sialate:CMP antiporter (TC 2.A.7.12) subfamily. Expressed in roots, cotyledons, leaves, stems, flowers and siliques.

It localises to the endoplasmic reticulum membrane. Functionally, mediates the transport of UDP-linked acetylated hexosamines across the endoplasmic reticulum (ER) membrane. Facilitates UDP-N-acetylglucosamine (UDP-GlcNAc) and UDP-N-acetylgalactosamine (UDP-GalNAc) transport. Regulates the cytokinin signal in meristematic cells through modulating activity of cytokinin oxidases/dehydrogenases. Part of the ER quality control system, which determines the fate of aberrant proteins in the secretory pathway. The sequence is that of UDP-N-acetylglucosamine transporter ROCK1 from Arabidopsis thaliana (Mouse-ear cress).